Consider the following 448-residue polypeptide: Putative RNA-ligase (448 aa).

The protein belongs to the asfivirus M448R family.

It localises to the virion. This Ornithodoros (relapsing fever ticks) protein is Putative RNA-ligase.